Reading from the N-terminus, the 142-residue chain is VapC ribonuclease R02377 (142 aa).

The PINc domain maps to 3–140 (FVDGSVIVAI…YKGNDFSQTD (138 aa)). The Mg(2+) site is built by D5 and D115.

The protein belongs to the PINc/VapC protein family. Mg(2+) is required as a cofactor.

Toxic component of a type II toxin-antitoxin (TA) system. An RNase. The polypeptide is VapC ribonuclease R02377 (Rhizobium meliloti (strain 1021) (Ensifer meliloti)).